A 403-amino-acid polypeptide reads, in one-letter code: Vitamin D(3) 25-hydroxylase (403 aa).

Cysteine 347 is a heme binding site.

It belongs to the cytochrome P450 family. Heme serves as cofactor.

It localises to the cytoplasm. It catalyses the reaction 5beta-cholestane-3alpha,7alpha,12alpha-triol + 6 reduced [adrenodoxin] + 3 O2 + 5 H(+) = (25R)-3alpha,7alpha,12alpha-trihydroxy-5beta-cholestan-26-oate + 6 oxidized [adrenodoxin] + 4 H2O. Activated by partially methylated beta-cyclodextrin. Hydroxylates vitamin D(3) into 25-hydroxyvitamin D(3) and 1-alpha,25-dihydroxyvitamin D(3), its physiologically active forms. It first hydroxylates the C-25 position of vitamin D(3) to form 25-hydroxyvitamin D(3), then subsequently hydroxylates the C-1-alpha position to form 1-alpha,25-dihydroxyvitamin D(3). Also displays 25-hydroxylase activity on vitamin D(2) and 7-dehydrocholesterol. May play a role in the biosynthesis of steroid metabolic intermediates. The protein is Vitamin D(3) 25-hydroxylase of Pseudonocardia autotrophica (Amycolata autotrophica).